The sequence spans 335 residues: UPF0353 protein MLBr01808 (335 aa).

2 helical membrane passes run 18–38 and 67–87; these read WFFL…MMQV and VPAI…AGPT. The 197-residue stretch at 98-294 folds into the VWFA domain; the sequence is VVMLVIDVSQ…AELKAVYASL (197 aa). A helical transmembrane segment spans residues 309-329; the sequence is AGWLRLGVLVLALAALTALLI.

It belongs to the UPF0353 family.

The protein resides in the cell membrane. This chain is UPF0353 protein MLBr01808, found in Mycobacterium leprae (strain Br4923).